The following is a 724-amino-acid chain: Probable serine/threonine-protein kinase KKQ8 (724 aa).

2 disordered regions span residues 1–81 and 93–188; these read MVMQ…RQRS and HPFR…KDIL. At S19 the chain carries Phosphoserine. Over residues 45–54 the composition is skewed to low complexity; that stretch reads PYRSSSTSPK. Polar residues predominate over residues 95-106; that stretch reads FRQTGSGASNSP. A compositionally biased stretch (low complexity) spans 143–162; the sequence is RSSSVSSCDSSNGTTSSSDS. S232, S238, and S241 each carry phosphoserine. The segment at 329 to 355 is disordered; the sequence is SQTNHEKRTGQSPNDSNRSSPTQGRED. The span at 338–351 shows a compositional bias: polar residues; that stretch reads GQSPNDSNRSSPTQ. The 301-residue stretch at 412–712 folds into the Protein kinase domain; it reads GHPVGLVGAG…VGKLLDMQWM (301 aa). ATP-binding positions include 418–426 and K455; that span reads VGAGAYGEV. D563 serves as the catalytic Proton acceptor.

This sequence belongs to the protein kinase superfamily. CAMK Ser/Thr protein kinase family. NPR/HAL subfamily. HAL5 sub-subfamily.

It is found in the cytoplasm. It catalyses the reaction L-seryl-[protein] + ATP = O-phospho-L-seryl-[protein] + ADP + H(+). The enzyme catalyses L-threonyl-[protein] + ATP = O-phospho-L-threonyl-[protein] + ADP + H(+). This chain is Probable serine/threonine-protein kinase KKQ8 (KKQ8), found in Saccharomyces cerevisiae (strain ATCC 204508 / S288c) (Baker's yeast).